We begin with the raw amino-acid sequence, 254 residues long: Phosphoribosylaminoimidazole-succinocarboxamide synthase (254 aa).

The protein belongs to the SAICAR synthetase family.

The enzyme catalyses 5-amino-1-(5-phospho-D-ribosyl)imidazole-4-carboxylate + L-aspartate + ATP = (2S)-2-[5-amino-1-(5-phospho-beta-D-ribosyl)imidazole-4-carboxamido]succinate + ADP + phosphate + 2 H(+). It participates in purine metabolism; IMP biosynthesis via de novo pathway; 5-amino-1-(5-phospho-D-ribosyl)imidazole-4-carboxamide from 5-amino-1-(5-phospho-D-ribosyl)imidazole-4-carboxylate: step 1/2. This is Phosphoribosylaminoimidazole-succinocarboxamide synthase from Bartonella henselae (strain ATCC 49882 / DSM 28221 / CCUG 30454 / Houston 1) (Rochalimaea henselae).